The sequence spans 437 residues: MAREQAVSGNPWVAVRPGDDVALLARRLSSAHQSFIDARGVPGQGLTDDSHVRSVVLESWMRSRNKGVNPDVVGNPEMLEGLELEKYRSAHPMSLIRPVIRKLLVEDAAETGLLIAISDAHGRLLWVEGDNSAKDKALSMNFVEGADWSEDRVGTNAPGTALALDHAVQIFGSEHFNRTVHDWSCSAAPVHDPTTGQILGAIDITGGPRVAVPEVLSLIRATVAAAESELRFHLLNSPIPLSATAPRLETFGAGRPTLVRGGDRIPISQRHAEILLLLSEHPEGLSSDHLAVLLDEGELDAVTIRAEMSRLRKVFGADRLASRPYRIITEFTTDVGDVRAALDRGDAATAMKLYSGPVLAGSASPGIEEVREELRTRVQAALLRGGDANLLARWTTSVHGREDSVVWEAYLSTLDPQSPLYSQVQARIDLLDRQLGI.

This is an uncharacterized protein from Rhodococcus erythropolis (Arthrobacter picolinophilus).